The sequence spans 792 residues: MGKKRIVLLLFISFSYAEITKESPLSIGQTLSSSNGVYELGFFSFNNSQNQYVGIWFKGIIPRVVVWVANREKPVTDSAANLVISSSGSLLLINGKHDVVWSTGEISASKGSHAELSDYGNLMVKDNVTGRTLWESFEHLGNTLLPLSTMMYNLVTGEKRGLSSWKSYTDPSPGDFWVQITPQVPSQGFVMRGSTPYYRTGPWAKTRYTGIPQMDESYTSPFSLHQDVNGSGYFSYFERDYKLSRIMLTSEGSMKVLRYNGLDWKSSYEGPANSCDIYGVCGPFGFCVISDPPKCKCFKGFVPKSIEEWKRGNWTSGCARRTELHCQGNSTGKDANVFHTVPNIKPPDFYEYANSVDAEGCYQSCLHNCSCLAFAYIPGIGCLMWSKDLMDTMQFSAGGEILSIRLAHSELDVHKRKMTIVASTVSLTLFVILGFATFGFWRNRVKHHDAWRNDLQSQDVPGLEFFEMNTIQTATSNFSLSNKLGHGGFGSVYKGKLQDGREIAVKRLSSSSEQGKQEFMNEIVLISKLQHRNLVRVLGCCVEGKEKLLIYEFMKNKSLDTFVFGSRKRLELDWPKRFDIIQGIVRGLLYLHRDSRLRVIHRDLKVSNILLDEKMNPKISDFGLARLFQGSQYQDKTRRVVGTLGYMSPEYAWTGVFSEKSDIYSFGVLLLEIISGEKISRFSYGEEGKALLAYVWECWCETRGVNLLDQALDDSSHPAEVGRCVQIGLLCVQHQPADRPNTLELLSMLTTTSDLPLPKQPTFAVHTRNDEPPSNDLMITVNEMTESVILGR.

The signal sequence occupies residues M1–A17. Residues E18 to F137 form the Bulb-type lectin domain. Residues E18–T419 are Extracellular-facing. N46, N127, and N229 each carry an N-linked (GlcNAc...) asparagine glycan. The region spanning P271 to E307 is the EGF-like; atypical domain. Intrachain disulfides connect C275-C287 and C281-C295. Residues N313, N329, and N368 are each glycosylated (N-linked (GlcNAc...) asparagine). The PAN domain occupies C326–H408. 2 disulfides stabilise this stretch: C361–C382 and C365–C371. The helical transmembrane segment at I420 to F440 threads the bilayer. Topologically, residues W441 to R792 are cytoplasmic. The Protein kinase domain occupies F478 to F763. ATP-binding positions include L484–V492 and K506. Phosphoserine occurs at positions 512 and 527. Positions R567–I584 are caM-binding. The active-site Proton acceptor is D603. Phosphoserine occurs at positions 607 and 620. At T637 the chain carries Phosphothreonine. S680 and S774 each carry phosphoserine.

This sequence belongs to the protein kinase superfamily. Ser/Thr protein kinase family.

It localises to the cell membrane. It catalyses the reaction L-seryl-[protein] + ATP = O-phospho-L-seryl-[protein] + ADP + H(+). The enzyme catalyses L-threonyl-[protein] + ATP = O-phospho-L-threonyl-[protein] + ADP + H(+). This Arabidopsis thaliana (Mouse-ear cress) protein is G-type lectin S-receptor-like serine/threonine-protein kinase At1g61440.